We begin with the raw amino-acid sequence, 284 residues long: MTTSTMQQLKHDGDFSDELNETSTIQFYNKVSQQRKRRKTRTTFSNCQLNELENNFNRQRYLTPTDRDRIAKHLGLTNTQVITWFQNRRAKLKREAEELERDVMALRKQKQQKFTCLSLSDHDHEETQIDDENEQGDNNNDDDGDDNDVEEDDGEEQEKNHTKYLTQPPSISNILPSSLKHFPSSTLNTLEIDNKHETLNMNLFINPFSNEKCLKRNKDLIRQQCYLFNHHINNYCTVNNDNNINNNNNNNNRKNSIDGMNKGRSIKKGNKIWCPALELEQEIH.

Positions 37 to 96 (RRKTRTTFSNCQLNELENNFNRQRYLTPTDRDRIAKHLGLTNTQVITWFQNRRAKLKREA) form a DNA-binding region, homeobox. Residues 117-172 (LSLSDHDHEETQIDDENEQGDNNNDDDGDDNDVEEDDGEEQEKNHTKYLTQPPSIS) are disordered. A compositionally biased stretch (acidic residues) spans 128 to 156 (QIDDENEQGDNNNDDDGDDNDVEEDDGEE).

It is found in the nucleus. The polypeptide is Homeobox protein SMOX-5 (SMOX-5) (Schistosoma mansoni (Blood fluke)).